The chain runs to 328 residues: Phenylalanine--tRNA ligase alpha subunit (328 aa).

Glu245 is a binding site for Mg(2+).

This sequence belongs to the class-II aminoacyl-tRNA synthetase family. Phe-tRNA synthetase alpha subunit type 1 subfamily. Tetramer of two alpha and two beta subunits. The cofactor is Mg(2+).

It localises to the cytoplasm. It carries out the reaction tRNA(Phe) + L-phenylalanine + ATP = L-phenylalanyl-tRNA(Phe) + AMP + diphosphate + H(+). In Helicobacter pylori (strain ATCC 700392 / 26695) (Campylobacter pylori), this protein is Phenylalanine--tRNA ligase alpha subunit (pheS).